Consider the following 416-residue polypeptide: Cysteate synthase (416 aa).

Lys-104 is subject to N6-(pyridoxal phosphate)lysine. A pyridoxal 5'-phosphate-binding site is contributed by Asn-130.

The protein belongs to the threonine synthase family. Cysteate synthase subfamily. Homotrimer. Pyridoxal 5'-phosphate serves as cofactor.

The enzyme catalyses O-phospho-L-serine + sulfite + H(+) = L-cysteate + phosphate. It participates in cofactor biosynthesis; coenzyme M biosynthesis. Its function is as follows. Specifically catalyzes the beta-elimination of phosphate from L-phosphoserine and the beta-addition of sulfite to the dehydroalanine intermediate to produce L-cysteate. The protein is Cysteate synthase of Methanosarcina mazei (strain ATCC BAA-159 / DSM 3647 / Goe1 / Go1 / JCM 11833 / OCM 88) (Methanosarcina frisia).